The primary structure comprises 274 residues: Long chain fatty acid elongase 5 (274 aa).

Topologically, residues 1-23 (MMDQILGTNFTYEGAKEVARGLE) are extracellular. Residues 24–44 (GFSAKLAVGYIATIFGLKYYM) form a helical membrane-spanning segment. The Cytoplasmic segment spans residues 45–61 (KDRKAFDLSTPLNIWNG). Residues 62 to 82 (ILSTFSLLGFLFTFPTLLSVI) traverse the membrane as a helical segment. Residues 83–105 (RKDGFSHTYSHVSELYTDSTSGY) lie on the Extracellular side of the membrane. Residues 106–126 (WIFLWVISKIPELLDTVFIVL) form a helical membrane-spanning segment. Over 127 to 129 (RKR) the chain is Cytoplasmic. A helical membrane pass occupies residues 130–150 (PLIFMHWYHHALTGYYALVCY). Residues 151 to 156 (HEDAVH) are Extracellular-facing. Residues 157-177 (MVWVVWMNYIIHAFMYGYYLL) traverse the membrane as a helical segment. Residues 178 to 187 (KSLKVPIPPS) are Cytoplasmic-facing. Residues 188-208 (VAQAITTSQMVQFAVAIFAQV) form a helical membrane-spanning segment. Topologically, residues 209–227 (HVSYKHYVEGVEGLAYSFR) are extracellular. Residues 228-248 (GTAIGFFMLTTYFYLWIQFYK) traverse the membrane as a helical segment. The Cytoplasmic segment spans residues 249–274 (EHYLKNGGKKYNLAKDQAKTQTKKAN).

This sequence belongs to the ELO family. Expressed in the gut and unidentified head cells.

It is found in the membrane. The catalysed reaction is 11-methyldodecanoyl-CoA + malonyl-CoA + H(+) = 3-oxoisopentadecanoyl-CoA + CO2 + CoA. The enzyme catalyses isopentadecanoyl-CoA + malonyl-CoA + H(+) = 3-oxoisoheptadecanoyl-CoA + CO2 + CoA. It functions in the pathway lipid metabolism; fatty acid biosynthesis. Functionally, catalyzes the first and rate-limiting reaction of the four reactions that constitute the long-chain fatty acids elongation cycle. Uses malonyl-CoA to add 2 carbons per cycle to the chain of long-chain fatty acids. Condensing enzyme required for the formation of isopentadecanoate (C15iso) and isoheptadecanoate (C17iso), both play critical roles in animal development and growth. This is Long chain fatty acid elongase 5 from Caenorhabditis elegans.